We begin with the raw amino-acid sequence, 681 residues long: UvrABC system protein C (681 aa).

Residues 1-23 form a disordered region; the sequence is MNGKKLPDGGILFDETDDEDDDA. A compositionally biased stretch (acidic residues) spans 14 to 23; the sequence is DETDDEDDDA. One can recognise a GIY-YIG domain in the interval 67–145; that stretch reads NSPGVYRMFN…IKRLRPRFNV (79 aa). The region spanning 255 to 290 is the UVR domain; the sequence is QAVKTAIARQMNEASEDLDFERAAIYRDRLAALSHV.

Belongs to the UvrC family. Interacts with UvrB in an incision complex.

Its subcellular location is the cytoplasm. The UvrABC repair system catalyzes the recognition and processing of DNA lesions. UvrC both incises the 5' and 3' sides of the lesion. The N-terminal half is responsible for the 3' incision and the C-terminal half is responsible for the 5' incision. In Agrobacterium fabrum (strain C58 / ATCC 33970) (Agrobacterium tumefaciens (strain C58)), this protein is UvrABC system protein C.